A 397-amino-acid polypeptide reads, in one-letter code: P2X purinoceptor 3 (397 aa).

Topologically, residues 1–20 (MNCISDFFTYETTKSVVVKS) are cytoplasmic. Residues 21–43 (WTIGIINRAVQLLIISYFVGWVF) traverse the membrane as a helical segment. Topologically, residues 44-322 (LHEKAYQVRD…AGKFNIIPTI (279 aa)) are extracellular. ATP-binding residues include Lys63 and Lys65. 3 cysteine pairs are disulfide-bonded: Cys107–Cys153, Cys116–Cys137, and Cys122–Cys147. Glu111 provides a ligand contact to Mg(2+). N-linked (GlcNAc...) asparagine glycosylation is present at Asn139. Residue Asp158 coordinates Mg(2+). Position 158 (Asp158) interacts with Ca(2+). Asn170 carries N-linked (GlcNAc...) asparagine glycosylation. Thr172 contributes to the ATP binding site. N-linked (GlcNAc...) asparagine glycosylation occurs at Asn194. 2 disulfide bridges follow: Cys203/Cys213 and Cys247/Cys256. 3 residues coordinate ATP: Ser275, Asn279, and Arg281. Asn290 carries N-linked (GlcNAc...) asparagine glycosylation. Lys299 is an ATP binding site. Residues 323 to 341 (ISSVAAFTSVGVGTVLCDI) form a helical membrane-spanning segment. At 342 to 397 (ILLNFLKGADHYKARKFEEVTETTLKGTASTNPVFASDQATVEKQSTDSGAYSIGH) the chain is on the cytoplasmic side.

The protein belongs to the P2X receptor family. As to quaternary structure, homotrimer. Forms heterotrimer with P2RX2. Heterotrimeric P2RX2/3 has a ligand dose-response profile that is distinct from either homotrimeric P2RX2 or P2RX3. In terms of tissue distribution, selectively expressed in sensory ganglia.

It localises to the cell membrane. The enzyme catalyses Ca(2+)(in) = Ca(2+)(out). The catalysed reaction is Na(+)(in) = Na(+)(out). Its activity is regulated as follows. Has high sensitivity to ATP. Fast activation by external ATP. Exhibits rapid desensitization. Sensitives to the ATP agonist:alpha/beta-methylene-ATP. Subject to allosteric inhibition by AF-219. Mg(2+) and Ca(2+) slow deactivation of P2RX3. Its function is as follows. Extracellular ATP-activated non-selective cation channel. Plays particularly important role in sensory neurons where its activation is critical for gustatory, nociceptive responses, visceral reflexes and sensory hypersensitization. In Rattus norvegicus (Rat), this protein is P2X purinoceptor 3 (P2rx3).